We begin with the raw amino-acid sequence, 225 residues long: Cytidylate kinase (225 aa).

An ATP-binding site is contributed by 12–20 (GPSGAGKGT).

Belongs to the cytidylate kinase family. Type 1 subfamily.

It localises to the cytoplasm. The enzyme catalyses CMP + ATP = CDP + ADP. The catalysed reaction is dCMP + ATP = dCDP + ADP. The protein is Cytidylate kinase of Pectobacterium carotovorum subsp. carotovorum (strain PC1).